We begin with the raw amino-acid sequence, 158 residues long: Cytochrome b6-f complex subunit 4 (158 aa).

Transmembrane regions (helical) follow at residues 34-54, 93-113, and 129-149; these read LLYI…GLAV, LLGV…PFLE, and TVFL…TLPI.

It belongs to the cytochrome b family. PetD subfamily. As to quaternary structure, the 4 large subunits of the cytochrome b6-f complex are cytochrome b6, subunit IV (17 kDa polypeptide, petD), cytochrome f and the Rieske protein, while the 4 small subunits are petG, petL, petM and petN. The complex functions as a dimer.

Its subcellular location is the plastid. It localises to the chloroplast thylakoid membrane. In terms of biological role, component of the cytochrome b6-f complex, which mediates electron transfer between photosystem II (PSII) and photosystem I (PSI), cyclic electron flow around PSI, and state transitions. The protein is Cytochrome b6-f complex subunit 4 of Liriodendron tulipifera (Tuliptree).